We begin with the raw amino-acid sequence, 366 residues long: D-alanine--D-alanine ligase (366 aa).

The ATP-grasp domain maps to 140 to 346; it reads KALFAQSDLP…YGELLSRLVD (207 aa). An ATP-binding site is contributed by 173–228; it reads EDRLGYPCFVKPANMGSSVGISKATNRAELVAAFDDAVRYDRKLIVEKGINVREIE. Mg(2+) is bound by residues Asp299, Glu313, and Asn315.

It belongs to the D-alanine--D-alanine ligase family. Mg(2+) serves as cofactor. The cofactor is Mn(2+).

Its subcellular location is the cytoplasm. The catalysed reaction is 2 D-alanine + ATP = D-alanyl-D-alanine + ADP + phosphate + H(+). It functions in the pathway cell wall biogenesis; peptidoglycan biosynthesis. Its function is as follows. Cell wall formation. The polypeptide is D-alanine--D-alanine ligase (Heliobacterium modesticaldum (strain ATCC 51547 / Ice1)).